A 352-amino-acid chain; its full sequence is 3-isopropylmalate dehydrogenase (352 aa).

Substrate contacts are provided by arginine 96, arginine 106, arginine 134, and aspartate 220. Mg(2+) contacts are provided by aspartate 220, aspartate 244, and aspartate 248. 277 to 289 provides a ligand contact to NAD(+); the sequence is GSAPDIAGKNLAN.

This sequence belongs to the isocitrate and isopropylmalate dehydrogenases family. LeuB type 1 subfamily. Homodimer. Requires Mg(2+) as cofactor. Mn(2+) serves as cofactor.

The protein localises to the cytoplasm. The catalysed reaction is (2R,3S)-3-isopropylmalate + NAD(+) = 4-methyl-2-oxopentanoate + CO2 + NADH. It participates in amino-acid biosynthesis; L-leucine biosynthesis; L-leucine from 3-methyl-2-oxobutanoate: step 3/4. Its function is as follows. Catalyzes the oxidation of 3-carboxy-2-hydroxy-4-methylpentanoate (3-isopropylmalate) to 3-carboxy-4-methyl-2-oxopentanoate. The product decarboxylates to 4-methyl-2 oxopentanoate. This Desulfitobacterium hafniense (strain Y51) protein is 3-isopropylmalate dehydrogenase.